Here is a 517-residue protein sequence, read N- to C-terminus: Nicotine N-demethylase CYP82E4 (517 aa).

The helical transmembrane segment at 2–22 (LSPIEAIVGLVTFTFLFYFLW) threads the bilayer. Lysine 254 is covalently cross-linked (Glycyl lysine isopeptide (Lys-Gly) (interchain with G-Cter in ubiquitin)). Position 457 (cysteine 457) interacts with heme.

It belongs to the cytochrome P450 family. CYP82E2 subfamily. Requires heme as cofactor. In terms of tissue distribution, expressed in leaves.

The protein localises to the membrane. It catalyses the reaction (S)-nicotine + reduced [NADPH--hemoprotein reductase] + O2 = (S)-nornicotine + formaldehyde + oxidized [NADPH--hemoprotein reductase] + H2O + H(+). It participates in alkaloid biosynthesis; nicotine biosynthesis. In terms of biological role, involved in the biosynthesis of pyridine alkaloid natural products, leading mainly to the production of anabasine, anatabine, nicotine and nornicotine, effective deterrents against herbivores with antiparasitic and pesticide properties (neurotoxins); nornicotine serves as the precursor in the synthesis of the carcinogen compound N'-nitrosonornicotine (NNN). Catalyzes the demethylation of nicotine to form nornicotine. The sequence is that of Nicotine N-demethylase CYP82E4 from Nicotiana tomentosiformis (Tobacco).